The sequence spans 718 residues: K(+)-insensitive pyrophosphate-energized proton pump (718 aa).

6 consecutive transmembrane segments (helical) span residues 6-26 (AVLVLVIACGVVSVLFAIWAI), 54-76 (LTRQYSTIAIVGVVVFLAAWYLL), 81-103 (AIGFLIGAVLSGVTGFIGMHVSV), 112-132 (AASLSLAGGLELAFKSGAITG), 133-153 (LLVAGLALLGVSVYYFILTVW), and 168-188 (VSLGFGASLISIFARLGGGIF). Lysine 190 lines the substrate pocket. Aspartate 193, aspartate 197, asparagine 220, and aspartate 223 together coordinate Mg(2+). 6 helical membrane-spanning segments follow: residues 240–260 (AVTVVATMVLGAIFFNGSDIL), 265–285 (LYPLMICGACVITSIVGTFFV), 300–320 (GLIATGLLSIVGLAIANTLTV), 335–355 (GTNLFLCGLIGLIVTGLIVVI), 385–405 (GLAVSLESTALPAIVIVGGII), and 413–433 (LFGTAIAVTAMLGIAGMIVAL). Aspartate 441 lines the Mg(2+) pocket. 4 helical membrane-spanning segments follow: residues 472–492 (AVTKGYAIGSAGLGALVLFAA), 524–544 (YVVAGLIFGGLIPYLFGGMAM), 593–613 (IIPSLLPVLAPIVVYFGVLLI), and 620–640 (AFAALGASLLGVIVNGLFVAI). The Ca(2+) site is built by aspartate 650, aspartate 682, and aspartate 686. Lysine 689 serves as a coordination point for substrate. Residues 695-715 (AVNPAIKITNIVALLLLAVLA) form a helical membrane-spanning segment.

Belongs to the H(+)-translocating pyrophosphatase (TC 3.A.10) family. K(+)-insensitive subfamily. Homodimer. Requires Mg(2+) as cofactor.

It localises to the cell inner membrane. The enzyme catalyses diphosphate + H2O + H(+)(in) = 2 phosphate + 2 H(+)(out). Proton pump that utilizes the energy of pyrophosphate hydrolysis as the driving force for proton movement across the membrane. Generates a proton motive force. The polypeptide is K(+)-insensitive pyrophosphate-energized proton pump (Brucella anthropi (strain ATCC 49188 / DSM 6882 / CCUG 24695 / JCM 21032 / LMG 3331 / NBRC 15819 / NCTC 12168 / Alc 37) (Ochrobactrum anthropi)).